The sequence spans 213 residues: Iron sulfur cluster assembly protein 1, mitochondrial (213 aa).

The protein belongs to the NifU family. In terms of assembly, component of the core Fe-S cluster (ISC) assembly machinery. It depends on [2Fe-2S] cluster as a cofactor.

It is found in the mitochondrion matrix. It participates in cofactor biosynthesis; iron-sulfur cluster biosynthesis. Functionally, scaffold protein for the de novo synthesis of iron-sulfur (Fe-S) clusters within mitochondria, which is required for maturation of both mitochondrial and cytoplasmic [2Fe-2S] and [4Fe-4S] proteins. First, a [2Fe-2S] cluster is transiently assembled on the scaffold protein ISU1. In a second step, the cluster is released from ISU1, transferred to a glutaredoxin, followed by the formation of mitochondrial [2Fe-2S] proteins, the synthesis of [4Fe-4S] clusters and their target-specific insertion into the recipient apoproteins. Cluster assembly on ISU1 depends on the function of the cysteine desulfurase complex NFS1-ISD11, which serves as the sulfur donor for cluster synthesis, the iron-binding protein frataxin as the putative iron donor, and the electron transfer chain comprised of ferredoxin reductase and ferredoxin, which receive their electrons from NADH. The chain is Iron sulfur cluster assembly protein 1, mitochondrial (ISU1) from Candida glabrata (strain ATCC 2001 / BCRC 20586 / JCM 3761 / NBRC 0622 / NRRL Y-65 / CBS 138) (Yeast).